The chain runs to 104 residues: Colipase-like protein 2 (104 aa).

An N-terminal signal peptide occupies residues 1–19 (MAFTQALVTVLAFLVGTLP). Disulfide bonds link cysteine 38-cysteine 49, cysteine 44-cysteine 60, cysteine 48-cysteine 82, cysteine 70-cysteine 90, and cysteine 84-cysteine 101.

The protein belongs to the colipase family.

It is found in the secreted. The sequence is that of Colipase-like protein 2 (Clpsl2) from Rattus norvegicus (Rat).